Consider the following 211-residue polypeptide: Transcription antitermination protein NusB (211 aa).

The protein belongs to the NusB family.

Functionally, involved in transcription antitermination. Required for transcription of ribosomal RNA (rRNA) genes. Binds specifically to the boxA antiterminator sequence of the ribosomal RNA (rrn) operons. The protein is Transcription antitermination protein NusB of Trichormus variabilis (strain ATCC 29413 / PCC 7937) (Anabaena variabilis).